A 238-amino-acid polypeptide reads, in one-letter code: RNA-binding protein pno1 (238 aa).

Positions 162-211 (QSRAIGRLAGKGGRTKFTIENVTKTRIVLADSKIHILGSYQNIQLARRAI) constitute a KH domain.

The protein belongs to the PNO1 family.

The protein localises to the nucleus. It localises to the nucleolus. This chain is RNA-binding protein pno1 (l(1)G0004), found in Drosophila pseudoobscura pseudoobscura (Fruit fly).